The primary structure comprises 294 residues: Cell division control protein 2 homolog A (294 aa).

Residues 4–287 (YEKVEKIGEG…ARNALQHEYF (284 aa)) enclose the Protein kinase domain. Residues 10–18 (IGEGTYGVV) and Lys-33 each bind ATP. Position 14 is a phosphothreonine (Thr-14). A Phosphotyrosine modification is found at Tyr-15. Asp-127 serves as the catalytic Proton acceptor. Position 161 is a phosphothreonine; by CAK (Thr-161).

This sequence belongs to the protein kinase superfamily. CMGC Ser/Thr protein kinase family. CDC2/CDKX subfamily.

The enzyme catalyses L-seryl-[protein] + ATP = O-phospho-L-seryl-[protein] + ADP + H(+). It catalyses the reaction L-threonyl-[protein] + ATP = O-phospho-L-threonyl-[protein] + ADP + H(+). It carries out the reaction [DNA-directed RNA polymerase] + ATP = phospho-[DNA-directed RNA polymerase] + ADP + H(+). With respect to regulation, phosphorylation at Thr-14 or Tyr-15 inactivates the enzyme, while phosphorylation at Thr-161 activates it. Its function is as follows. Plays a key role in the control of the eukaryotic cell cycle. The chain is Cell division control protein 2 homolog A (CDC2A) from Antirrhinum majus (Garden snapdragon).